The sequence spans 248 residues: MAGHSKWANIQYRKGAQDAKRGKLFTRLIREITVAARLEGGDPATSPRLRTAIDKAFAANMPKDNIERAIKRGTGDLEGVAYEEVRYEGYGPYGVAVMVDCMTDNRNRTVAEIRHVFSKWGGNLGTDGSVAYLFSKKGIISYSKESNEDAIMEVAIEGGAEDVVTNEDSSIDVFTEPEEFSTVKKALDEAGLKAEQAEITQHASTSVSLALEEARKMLDFLDALEELDDVQQVYSNADFSEEILAQLG.

This sequence belongs to the TACO1 family.

It is found in the cytoplasm. The sequence is that of Probable transcriptional regulatory protein Noc_0137 from Nitrosococcus oceani (strain ATCC 19707 / BCRC 17464 / JCM 30415 / NCIMB 11848 / C-107).